Consider the following 256-residue polypeptide: Doublecortin domain-containing protein (256 aa).

The tract at residues 71-103 is partial p25alpha domain; it reads NVFERLTDTAYYTGSHRERFDEFGNGRGIAGRE. Residues 152–226 form the Doublecortin domain; the sequence is RLMWLYRNGD…AKYLCTSGEP (75 aa).

The protein localises to the cytoplasm. It localises to the cytoskeleton. Specifically required in the formation and maintenance of the conoid fibers; the conoid is a component of the cytoskeletal apical complex, which is composed of a left-handed spiral of 14 fibers made from a nontubular tubulin polymer. Promotes the organization, curvature, and stability of the conoid fibers, and probably bridges other conoid components to the tubulin core. This is Doublecortin domain-containing protein from Toxoplasma gondii (strain ATCC 50861 / VEG).